Consider the following 328-residue polypeptide: Hairy/enhancer-of-split related with YRPW motif-like protein (328 aa).

The segment at 1 to 54 (MKRPREPSGSDSESDGPIDVGREGELSQMARPLSTPSPSQMQARKKRRGIIEKR) is disordered. The tract at residues 42-111 (QARKKRRGII…GGTGFFDARA (70 aa)) is transcriptional repression and interaction with NCOR1 and SIN3A. A bHLH domain is found at 43-98 (ARKKRRGIIEKRRRDRINSSLSELRRLVPTAFEKQGSSKLEKAEVLQMTVDHLKML). In terms of domain architecture, Orange spans 116–153 (FRSIGFRECLTEVIRYLGVLEGPSSRADPVRIRLLSHL). Residues 236-272 (LLPSRGASSTRRARPLERPAAPLPAAPSGRATRGSHM) are disordered.

It belongs to the HEY family. In terms of assembly, self-associates. Interacts with GATA4, GATA6, HES1, HEY1 and HEY2. Interacts with HDAC1, NCOR1 and SIN3A.

Its subcellular location is the nucleus. Its function is as follows. Downstream effector of Notch signaling which may be required for cardiovascular development. Transcriptional repressor which binds preferentially to the canonical E box sequence 5'-CACGTG-3'. Represses transcription by the cardiac transcriptional activators GATA4 and GATA6. In Bos taurus (Bovine), this protein is Hairy/enhancer-of-split related with YRPW motif-like protein (HEYL).